The chain runs to 478 residues: Glutamate--tRNA ligase (478 aa).

A 'HIGH' region motif is present at residues 9–19; it reads PSPTGLLHIGT. The 'KMSKS' region signature appears at 248 to 252; sequence KLSKR. Residue K251 coordinates ATP.

It belongs to the class-I aminoacyl-tRNA synthetase family. Glutamate--tRNA ligase type 1 subfamily. In terms of assembly, monomer.

It is found in the cytoplasm. It catalyses the reaction tRNA(Glu) + L-glutamate + ATP = L-glutamyl-tRNA(Glu) + AMP + diphosphate. Its function is as follows. Catalyzes the attachment of glutamate to tRNA(Glu) in a two-step reaction: glutamate is first activated by ATP to form Glu-AMP and then transferred to the acceptor end of tRNA(Glu). The sequence is that of Glutamate--tRNA ligase from Prochlorococcus marinus (strain MIT 9515).